The following is a 127-amino-acid chain: Large ribosomal subunit protein bL17 (127 aa).

It belongs to the bacterial ribosomal protein bL17 family. As to quaternary structure, part of the 50S ribosomal subunit. Contacts protein L32.

This is Large ribosomal subunit protein bL17 from Levilactobacillus brevis (strain ATCC 367 / BCRC 12310 / CIP 105137 / JCM 1170 / LMG 11437 / NCIMB 947 / NCTC 947) (Lactobacillus brevis).